The following is a 500-amino-acid chain: Na(+)/H(+) antiporter NhaB (500 aa).

12 consecutive transmembrane segments (helical) span residues 34–54 (LLLATLGPVVTGWVLVIQFIF), 58–78 (MALKCYPLMPGGLLLVEALLL), 96–116 (VILLLMFMVAGIHFMKELLLF), 129–149 (AVLSLLFCVLSAFLSAFLDAL), 150–170 (TVTAVIISAAVGFYAVYHRVA), 205–225 (LLMHGAVGTALGGVCTLVGEP), 241–261 (FFLKVAPVSMPVLAAGLVTCV), 311–331 (ILIVCLGLHIAEVGLIGLMVI), 350–370 (FQDAMPFTALLVVFFAVVAVI), 394–414 (MLYLANGLLSAISDNVFVATI), 450–470 (ATPNGQAAFLFLLTSAIAPLI), and 477–497 (MVWMALPYTVVMGGLGWWAVT).

The protein belongs to the NhaB Na(+)/H(+) (TC 2.A.34) antiporter family.

It localises to the cell inner membrane. The enzyme catalyses 2 Na(+)(in) + 3 H(+)(out) = 2 Na(+)(out) + 3 H(+)(in). In terms of biological role, na(+)/H(+) antiporter that extrudes sodium in exchange for external protons. The sequence is that of Na(+)/H(+) antiporter NhaB from Pseudomonas entomophila (strain L48).